Reading from the N-terminus, the 626-residue chain is Putative ankyrin repeat protein R837 (626 aa).

ANK repeat units follow at residues 42–72 (EYFN…GLIR), 80–109 (TLNT…NHRY), 110–139 (SEDK…NIKS), 140–169 (RNNY…DITV), 171–199 (DYEV…DIKK), 201–230 (NKKR…DVYR), 242–269 (KNYK…YQLS), 270–298 (DTNN…LHEL), 299–328 (NLNQ…DINT), 330–358 (GNSC…RLTS), 393–416 (TIMS…KSSL), 417–446 (DYES…ITKQ), 452–479 (INNS…GINI), 480–509 (CINY…NINE), 510–539 (FGDL…NIYI), 540–569 (IKDN…DYHK), 570–599 (KNEL…KTKT), and 601–626 (FFDP…NEIK).

The protein is Putative ankyrin repeat protein R837 of Acanthamoeba polyphaga (Amoeba).